Here is a 386-residue protein sequence, read N- to C-terminus: Patatin-16 (386 aa).

The N-terminal stretch at 1–23 (MATTKSFLILIVMILATTSSTFA) is a signal peptide. Positions 32 to 229 (LSIDGGGIKG…TVADPALLSV (198 aa)) constitute a PNPLA domain. Residues 36–41 (GGGIKG) carry the GXGXXG motif. A GXSXG motif is present at residues 75 to 79 (GTSTG). S77 acts as the Nucleophile in catalysis. N115 is a glycosylation site (N-linked (GlcNAc...) asparagine). The active-site Proton acceptor is D215. Positions 215–217 (DGA) match the DGA/G motif. A coiled-coil region spans residues 360-384 (ETYEEALKRFAKLLSDRKKLRANKA).

It belongs to the patatin family.

It localises to the vacuole. Functionally, probable lipolytic acyl hydrolase (LAH), an activity which is thought to be involved in the response of tubers to pathogens. This chain is Patatin-16, found in Solanum tuberosum (Potato).